Here is a 204-residue protein sequence, read N- to C-terminus: Imidazole glycerol phosphate synthase subunit HisH 1 (204 aa).

Positions 5–204 constitute a Glutamine amidotransferase type-1 domain; sequence KVVIIDTGCA…AKLIQNFLEL (200 aa). C80 functions as the Nucleophile in the catalytic mechanism. Active-site residues include H186 and E188.

As to quaternary structure, heterodimer of HisH and HisF.

The protein resides in the cytoplasm. The catalysed reaction is 5-[(5-phospho-1-deoxy-D-ribulos-1-ylimino)methylamino]-1-(5-phospho-beta-D-ribosyl)imidazole-4-carboxamide + L-glutamine = D-erythro-1-(imidazol-4-yl)glycerol 3-phosphate + 5-amino-1-(5-phospho-beta-D-ribosyl)imidazole-4-carboxamide + L-glutamate + H(+). It catalyses the reaction L-glutamine + H2O = L-glutamate + NH4(+). Its pathway is amino-acid biosynthesis; L-histidine biosynthesis; L-histidine from 5-phospho-alpha-D-ribose 1-diphosphate: step 5/9. Functionally, IGPS catalyzes the conversion of PRFAR and glutamine to IGP, AICAR and glutamate. The HisH subunit provides the glutamine amidotransferase activity that produces the ammonia necessary to HisF for the synthesis of IGP and AICAR. The chain is Imidazole glycerol phosphate synthase subunit HisH 1 (hisH1) from Vibrio vulnificus (strain YJ016).